Here is a 356-residue protein sequence, read N- to C-terminus: Zinc finger CCCH domain-containing protein 49 (356 aa).

2 C3H1-type zinc fingers span residues 120 to 146 and 155 to 177; these read YSGTACPDFRKGGCKKGDSCEFAHGVF and YRTQPCKDGGNCLRKICFFAHSP. The disordered stretch occupies residues 209-235; the sequence is ISPVSGSPPMSPRADSESSPMTQSLSR. The segment covering 225–235 has biased composition (polar residues); it reads ESSPMTQSLSR.

In Arabidopsis thaliana (Mouse-ear cress), this protein is Zinc finger CCCH domain-containing protein 49.